Consider the following 192-residue polypeptide: Protein GrpE (192 aa).

Positions 1–20 (MEERNEQVVEEVKEEVKEAQ) are enriched in basic and acidic residues. The disordered stretch occupies residues 1–39 (MEERNEQVVEEVKEEVKEAQVEEAVTSEDSEESVEEKSE). Residues 25–34 (VTSEDSEESV) show a composition bias toward acidic residues.

The protein belongs to the GrpE family. As to quaternary structure, homodimer.

The protein localises to the cytoplasm. Functionally, participates actively in the response to hyperosmotic and heat shock by preventing the aggregation of stress-denatured proteins, in association with DnaK and GrpE. It is the nucleotide exchange factor for DnaK and may function as a thermosensor. Unfolded proteins bind initially to DnaJ; upon interaction with the DnaJ-bound protein, DnaK hydrolyzes its bound ATP, resulting in the formation of a stable complex. GrpE releases ADP from DnaK; ATP binding to DnaK triggers the release of the substrate protein, thus completing the reaction cycle. Several rounds of ATP-dependent interactions between DnaJ, DnaK and GrpE are required for fully efficient folding. This Bacillus cereus (strain ATCC 10987 / NRS 248) protein is Protein GrpE.